Consider the following 314-residue polypeptide: Lipid A biosynthesis acyltransferase 2 (314 aa).

A helical membrane pass occupies residues 17 to 37; sequence LSPVYWFTWFVLGMIAGISMF. The HXXXXD motif motif lies at 137-142; that stretch reads HGWSVD.

Belongs to the LpxL/LpxM/LpxP family. LpxM subfamily.

It localises to the cell inner membrane. The catalysed reaction is an alpha-Kdo-(2-&gt;4)-alpha-Kdo-(2-&gt;6)-(acyl)-lipid IVA + a fatty acyl-[ACP] = an alpha-Kdo-(2-&gt;4)-alpha-Kdo-(2-&gt;6)-lipid A + holo-[ACP]. It participates in glycolipid biosynthesis; KDO(2)-lipid A biosynthesis; KDO(2)-lipid A from CMP-3-deoxy-D-manno-octulosonate and lipid IV(A): step 4/4. It functions in the pathway bacterial outer membrane biogenesis; lipopolysaccharide biosynthesis. Functionally, catalyzes the transfer of an acyl chain from an acyl-[acyl-carrier-protein] (ACP) to a Kdo(2)-(acyl)-lipid IV(A) to form a Kdo(2)-lipid A. The protein is Lipid A biosynthesis acyltransferase 2 of Shigella flexneri.